The sequence spans 247 residues: NADH-ubiquinone oxidoreductase chain 6 (247 aa).

The next 5 helical transmembrane spans lie at Thr-18–Ala-38, Ser-44–Leu-64, Ile-70–Phe-90, Tyr-104–Asp-124, and Val-168–Thr-188.

Belongs to the complex I subunit 6 family.

Its subcellular location is the mitochondrion membrane. The enzyme catalyses a ubiquinone + NADH + 5 H(+)(in) = a ubiquinol + NAD(+) + 4 H(+)(out). Its function is as follows. Core subunit of the mitochondrial membrane respiratory chain NADH dehydrogenase (Complex I) that is believed to belong to the minimal assembly required for catalysis. Complex I functions in the transfer of electrons from NADH to the respiratory chain. The immediate electron acceptor for the enzyme is believed to be ubiquinone. The polypeptide is NADH-ubiquinone oxidoreductase chain 6 (ND6) (Triticum aestivum (Wheat)).